A 403-amino-acid chain; its full sequence is Synaptotagmin-7 (403 aa).

Residues 1 to 16 (MYRDPEAASPGAPTRD) are Vesicular-facing. The helical transmembrane segment at 17–37 (VLLVSAIITVSLSVTIVLCGL) threads the bilayer. Over 38 to 403 (CHWCQRKLGK…PVAQWHQLKA (366 aa)) the chain is Cytoplasmic. Ser52 carries the phosphoserine modification. The disordered stretch occupies residues 53-103 (LETVGTPDSGRGRGEKKAIKLPAGGKAVNTAPVPGQTPHDESDRRTETRSS). Phosphothreonine is present on Thr58. At Ser61 the chain carries Phosphoserine. Over residues 90–100 (PHDESDRRTET) the composition is skewed to basic and acidic residues. Phosphoserine occurs at positions 119 and 122. C2 domains follow at residues 135–255 (NLGR…TFWK) and 266–399 (SRGE…AQWH). Residue Asp166 participates in Ca(2+) binding. Residues Gly169 and Ser171 each carry the asymmetric dimethylarginine modification. Residues Asp172, Asp225, Asp227, Ser230, Asp233, Asp297, Asp303, Asp357, Asp359, Ser362, and Asp365 each contribute to the Ca(2+) site.

Belongs to the synaptotagmin family. Homodimer. Can also form heterodimers with SYT6, SYT9 and SYT10. Interacts with calmodulin (CALM1, CALM2 or CALM3). Interacts with CD63; required for localization to lysosomes. Interacts with APP. The cofactor is Ca(2+). Palmitoylated at its vesicular N-terminus; palmitoylation is required for localization to lysosome and phagocytosis in macrophages. In terms of tissue distribution, widely expressed. Expressed in insulin-secreting cells. Present in glucagon-secreting cells (at protein level).

It localises to the cell membrane. The protein resides in the presynaptic cell membrane. It is found in the cytoplasmic vesicle. Its subcellular location is the secretory vesicle. The protein localises to the synaptic vesicle membrane. It localises to the lysosome membrane. The protein resides in the phagosome membrane. It is found in the peroxisome membrane. Its subcellular location is the secretory vesicle membrane. Ca(2+) sensor involved in Ca(2+)-dependent exocytosis of secretory and synaptic vesicles through Ca(2+) and phospholipid binding to the C2 domain. Ca(2+) induces binding of the C2-domains to phospholipid membranes and to assembled SNARE-complexes; both actions contribute to triggering exocytosis. SYT7 binds Ca(2+) with high affinity and slow kinetics compared to other synaptotagmins. Involved in Ca(2+)-triggered lysosomal exocytosis, a major component of the plasma membrane repair. Ca(2+)-regulated delivery of lysosomal membranes to the cell surface is also involved in the phagocytic uptake of particles by macrophages. Ca(2+)-triggered lysosomal exocytosis also plays a role in bone remodeling by regulating secretory pathways in osteoclasts and osteoblasts. Involved in cholesterol transport from lysosome to peroxisome by promoting membrane contacts between lysosomes and peroxisomes: probably acts by promoting vesicle fusion by binding phosphatidylinositol-4,5-bisphosphate on peroxisomal membranes. Acts as a key mediator of synaptic facilitation, a process also named short-term synaptic potentiation: synaptic facilitation takes place at synapses with a low initial release probability and is caused by influx of Ca(2+) into the axon terminal after spike generation, increasing the release probability of neurotransmitters. Probably mediates synaptic facilitation by directly increasing the probability of release. May also contribute to synaptic facilitation by regulating synaptic vesicle replenishment, a process required to ensure that synaptic vesicles are ready for the arrival of the next action potential: SYT7 is required for synaptic vesicle replenishment by acting as a sensor for Ca(2+) and by forming a complex with calmodulin. Also acts as a regulator of Ca(2+)-dependent insulin and glucagon secretion in beta-cells. Triggers exocytosis by promoting fusion pore opening and fusion pore expansion in chromaffin cells. Also regulates the secretion of some non-synaptic secretory granules of specialized cells. The polypeptide is Synaptotagmin-7 (Mus musculus (Mouse)).